The primary structure comprises 298 residues: Esterase Rv0045c (298 aa).

The active-site Nucleophile is serine 122. Catalysis depends on residues aspartate 146 and histidine 277.

The protein belongs to the AB hydrolase superfamily. Monomer.

The enzyme catalyses a carboxylic ester + H2O = an alcohol + a carboxylate + H(+). It carries out the reaction a butanoate ester + H2O = an aliphatic alcohol + butanoate + H(+). The catalysed reaction is an acetyl ester + H2O = an aliphatic alcohol + acetate + H(+). It catalyses the reaction a hexanoate ester + H2O = an aliphatic alcohol + hexanoate + H(+). The enzyme catalyses a tetradecanoate ester + H2O = an aliphatic alcohol + tetradecanoate + H(+). Its activity is regulated as follows. Hydrolysis of a fluorogenic ester substrate (MOAME) is allosterically inhibited by divalent transition metal cations (Cu(2+), Zn(2+), Ni(2+) and Co(2+)). Inhibition is largely due to a two order of magnitude drop in kcat, with relatively little change in KM. The thermal stability decreases with increasing concentrations of Ni(2+). In terms of biological role, esterase likely involved in ester/lipid metabolism. Shows strong substrate selectivity toward short, straight chain alkyl esters with the highest activity toward four atom chains. The physiological substrate is unknown. Is able to hydrolyze ester bonds within a wide range of p-nitrophenyl derivatives (C2-C14) in vitro. This is Esterase Rv0045c from Mycobacterium tuberculosis (strain ATCC 25618 / H37Rv).